The following is a 670-amino-acid chain: MAAAAAASSMAKRKQRKAATEQEVENHDEATVAAEAGPENDGHTAHAAEEAAAAEEGVEREGGGEGGAEGEEGPDAAARGGEEGKEEEEREVSFDELGLDEQLKRALRKKGLDKATPIQREAIPLILEGKDVVAKAKTGSGKTFAYLLPMLHELLKLSAEGRIRKSAPNVFILVPTRELCQQVHNEASSLLEFCTSKLKVVQVNASMSDKDIKVALSGPPNILVTTPACVASCISKGIIRGSSIKESLSMMILDEADLLLSYRCEDDIKALVPHIPRSCQSILMSATSSADIEKLTKLLLHNPFILTLTEVGHAKDDLIPKNVQQFWISCDAKDKMLYILVLLKLELIQKKVLIFVNSIDSAFKLRLFLEKFGIRSSVLNAELPQNSRLHIIQAFNARLFDYLIATDDNKSKEERQANKGNKKDSRVSRKQLQQTLDAEFGVVRGIDFKNVFTVVNYDMPPDPAGYVHRVGRTGRANKTGASISLVSPKENGIFEDIENMLKDVENRDTSCISPFPLLTKNAVESLRYRAQDVARSVTTRDIKEARRQDIKNEILNSEKLKAHFDENPRDLDLLKHDKLLSNKEIPAHLRDVPEYLIDPTTKEASNVVKLSRAAMDIDKPRRRKRMGFKGGSGRSSDPLKTFSAEGKSRRRGRKERDGEQDRRKRKKVES.

Over residues 1 to 10 (MAAAAAASSM) the composition is skewed to low complexity. The segment at 1–97 (MAAAAAASSM…EEREVSFDEL (97 aa)) is disordered. Basic and acidic residues-rich tracts occupy residues 18-30 (AATE…HDEA) and 40-49 (NDGHTAHAAE). The short motif at 92 to 120 (VSFDELGLDEQLKRALRKKGLDKATPIQR) is the Q motif element. Residues 123–306 (IPLILEGKDV…KLLLHNPFIL (184 aa)) enclose the Helicase ATP-binding domain. Position 136-143 (136-143 (AKTGSGKT)) interacts with ATP. Positions 254 to 257 (DEAD) match the DEAD box motif. Positions 340-523 (LVLLKLELIQ…PFPLLTKNAV (184 aa)) constitute a Helicase C-terminal domain. The disordered stretch occupies residues 616-670 (DIDKPRRRKRMGFKGGSGRSSDPLKTFSAEGKSRRRGRKERDGEQDRRKRKKVES). Over residues 654 to 670 (KERDGEQDRRKRKKVES) the composition is skewed to basic and acidic residues.

Belongs to the DEAD box helicase family. DDX56/DBP9 subfamily.

The enzyme catalyses ATP + H2O = ADP + phosphate + H(+). The chain is DEAD-box ATP-dependent RNA helicase 16 from Oryza sativa subsp. japonica (Rice).